Reading from the N-terminus, the 301-residue chain is Acetyl-coenzyme A carboxylase carboxyl transferase subunit beta (301 aa).

The region spanning 25-294 (LWIKDPSTGE…NSDAPAPQKP (270 aa)) is the CoA carboxyltransferase N-terminal domain.

This sequence belongs to the AccD/PCCB family. As to quaternary structure, acetyl-CoA carboxylase is a heterohexamer composed of biotin carboxyl carrier protein (AccB), biotin carboxylase (AccC) and two subunits each of ACCase subunit alpha (AccA) and ACCase subunit beta (AccD).

It localises to the cytoplasm. The enzyme catalyses N(6)-carboxybiotinyl-L-lysyl-[protein] + acetyl-CoA = N(6)-biotinyl-L-lysyl-[protein] + malonyl-CoA. It functions in the pathway lipid metabolism; malonyl-CoA biosynthesis; malonyl-CoA from acetyl-CoA: step 1/1. In terms of biological role, component of the acetyl coenzyme A carboxylase (ACC) complex. Biotin carboxylase (BC) catalyzes the carboxylation of biotin on its carrier protein (BCCP) and then the CO(2) group is transferred by the transcarboxylase to acetyl-CoA to form malonyl-CoA. This Brucella canis (strain ATCC 23365 / NCTC 10854 / RM-666) protein is Acetyl-coenzyme A carboxylase carboxyl transferase subunit beta.